The sequence spans 673 residues: Potassium voltage-gated channel subfamily KQT member 1 (673 aa).

Disordered stretches follow at residues 1-28 and 61-80; these read MAAA…RGSA and GPSS…LGPR. The Cytoplasmic portion of the chain corresponds to 1-118; the sequence is MAAATSPPRA…YNFLERPTGW (118 aa). A Phosphoserine modification is found at S27. A compositionally biased stretch (low complexity) spans 66-75; sequence AAPAASPAAA. A helical transmembrane segment spans residues 119–140; sequence KCFVYHFAVFLIVLVCLIFSVL. Residues 141–151 are Extracellular-facing; sequence STIEQYVALAT. A helical transmembrane segment spans residues 152-174; the sequence is GTLFWMEIVLVVFFGTEYAVRLW. Residues 175–190 lie on the Cytoplasmic side of the membrane; it reads SAGCRSKYVGIWGRLR. A helical transmembrane segment spans residues 191-216; it reads FARKPISIIDLIVVVASMVVLCVGSK. The Extracellular portion of the chain corresponds to 217–224; the sequence is GQVFATSA. Residues 225 to 240 traverse the membrane as a helical; Voltage-sensor segment; the sequence is IRGIRFLQILRMLHVD. Residues 236 to 244 form an interaction with KCNE3 region; the sequence is MLHVDRQGG. The Cytoplasmic portion of the chain corresponds to 241–258; the sequence is RQGGTWRLLGSVVFIHRQ. Q242 is an a 1,2-diacyl-sn-glycero-3-phospho-(1D-myo-inositol-4,5-bisphosphate) binding site. The helical transmembrane segment at 259 to 281 threads the bilayer; it reads ELITTLYIGFLGLIFSSYFVYLA. The Extracellular segment spans residues 282–297; it reads EKDAVNESGQVEFGSY. N287 carries N-linked (GlcNAc...) asparagine glycosylation. The pore-forming intramembrane region spans 298–318; the sequence is ADALWWGVVTVTTIGYGDKVP. Residues 319–320 are Extracellular-facing; it reads QT. Residues 321–346 form a helical membrane-spanning segment; it reads WVGKTIASCFSVFAISFFALPAGILG. Residues 347-673 lie on the Cytoplasmic side of the membrane; it reads SGFALKVQQK…VPGRGPEEGS (327 aa). An interaction with CALM region spans residues 368–380; sequence AAASLIQTAWRCY. Residues S405 and S407 each carry the phosphoserine modification. The segment at 514–528 is interaction with CALM; calcium-dependent; sequence KVIRRMQYFVAKKKF. The tract at residues 534 to 571 is interaction with KCNE1 C-terminus; sequence PYDVRDVIEQYSQGHLNLMVRIKELQRRLDQSIGRPAL. The interaction with AKAP9 stretch occupies residues 587–615; sequence IGARLNRVEDKVTQLDQRLELITDMLQQL. The tract at residues 588-619 is C-terminal assembly domain (tetramerization); it reads GARLNRVEDKVTQLDQRLELITDMLQQLLSLH. The interval 619–673 is disordered; sequence HRGGTPGSRAPGGGGAQVAQPCSGGSINPELFLPSNALPTYEQLTVPGRGPEEGS. Positions 622–634 are enriched in gly residues; the sequence is GTPGSRAPGGGGA.

Belongs to the potassium channel family. KQT (TC 1.A.1.15) subfamily. Kv7.1/KCNQ1 sub-subfamily. As to quaternary structure, tetramer. Heterotetramer with KCNE1; targets to the membrane raft. Interacts (via C-terminus) with CALM; forms a heterooctameric structure (with 4:4 KCNQ1:CALM stoichiometry) in a calcium-independent manner. Interacts with AKAP9; targets protein kinase A (PKA) catalytic and regulatory subunits and protein phosphatase 1 (PP1) to the KCNQ1-KCNE1 complex, allowing PKA-mediated phosphorylation and increase of delayed rectifier potassium channel activity. Interacts with KCNE2; form a heterooligomer complex that targets to the membrane raft and leading to currents with an apparently instantaneous activation, a rapid deactivation process and a linear current-voltage relationship and decreases the amplitude of the outward current. Interacts with AP2M1; mediates estrogen-induced internalization via clathrin-coated vesicles. Interacts with NEDD4L; promotes internalization and decreases I(Ks) currents. Interacts with USP2; counteracts the NEDD4L-specific down-regulation of I(Ks) and restore plasma membrane localization. Heterotetramer with KCNQ5; has a voltage-gated potassium channel activity. Interacts with KCNE3; four KCNE3 molecules are bound to one KCNQ1 tetramer (4:4 KCNQ1:KCNE3 stoichiometry); alters membrane raft localization; affects KCNQ1 structure and gating properties. Interacts with KCNE4; impairs KCNQ1 localization in lipid rafts and inhibits voltage-gated potassium channel activity. Interacts with KCNE5; impairs KCNQ1 localization in lipid rafts and only conducts current upon strong and continued depolarization. Interacts with SLC5A3; forms coregulatory channel-transporter complexes that modulate Na(+)-coupled myo-inositol influx through the transporter. Ubiquitinated by NEDD4L; promotes internalization. The ubiquitinylated form is internalized through a clathrin-mediated endocytosis by interacting with AP2M1 and is recycled back to the cell membrane via RAB4A and RAB11A. Post-translationally, deubiquitinated by USP2; counteracts the NEDD4L-specific down-regulation of I(Ks) and restores the membrane localization.

It is found in the cell membrane. It localises to the cytoplasmic vesicle membrane. The protein localises to the early endosome. Its subcellular location is the membrane raft. The protein resides in the endoplasmic reticulum. It is found in the basolateral cell membrane. It localises to the apical cell membrane. The catalysed reaction is K(+)(in) = K(+)(out). Its activity is regulated as follows. PIP2 molecule is essential to activate KCNQ channels by inducing the coupling of the voltage-sensing domain (VSD) and the pore-forming domain (PD). Upon channel activation, PIP2 disrupts the VSD-calmodulin/CALM interactions, causing the release of CALM from the VSD which triggers the opening of the gate. Calcium potentiates KCNQ1 channel current through calcium-bound CALM. Calcium-bound CALM competes with PIP2 to stabilize the channel open state. In terms of biological role, pore-forming subunit of the voltage-gated potassium (Kv) channel involved in the regulation of cardiomyocyte excitability and important in normal development and functions of myocardium, inner ear, stomach and colon. Associates with KCNE beta subunits that modulates current kinetics. Induces a voltage-dependent by rapidly activating and slowly deactivating potassium-selective outward current. Also promotes a delayed voltage activated potassium current showing outward rectification characteristic. During beta-adrenergic receptor stimulation participates in cardiac repolarization by associating with KCNE1 to form the I(Ks) cardiac potassium current that increases the amplitude and slows down the activation kinetics of outward potassium current I(Ks). Muscarinic agonist oxotremorine-M strongly suppresses KCNQ1/KCNE1 current. When associated with KCNE3, forms the potassium channel that is important for cyclic AMP-stimulated intestinal secretion of chloride ions. This interaction with KCNE3 is reduced by 17beta-estradiol, resulting in the reduction of currents. During conditions of increased substrate load, maintains the driving force for proximal tubular and intestinal sodium ions absorption, gastric acid secretion, and cAMP-induced jejunal chloride ions secretion. Allows the provision of potassium ions to the luminal membrane of the secretory canaliculus in the resting state as well as during stimulated acid secretion. When associated with KCNE2, forms a heterooligomer complex leading to currents with an apparently instantaneous activation, a rapid deactivation process and a linear current-voltage relationship and decreases the amplitude of the outward current. When associated with KCNE4, inhibits voltage-gated potassium channel activity. When associated with KCNE5, this complex only conducts current upon strong and continued depolarization. Also forms a heterotetramer with KCNQ5 that has a voltage-gated potassium channel activity. Binds with phosphatidylinositol 4,5-bisphosphate. KCNQ1-KCNE2 channel associates with Na(+)-coupled myo-inositol symporter in the apical membrane of choroid plexus epithelium and regulates the myo-inositol gradient between blood and cerebrospinal fluid with an impact on neuron excitability. The chain is Potassium voltage-gated channel subfamily KQT member 1 from Sus scrofa (Pig).